The following is a 492-amino-acid chain: Bifunctional shikimate kinase/3-dehydroquinate synthase (492 aa).

Residues 1–161 (MRIFLVGMMG…TALVVLEALD (161 aa)) form a shikimate kinase region. 10–15 (GSGKST) is a binding site for ATP. Ser-14 contacts Mg(2+). Asp-32, Arg-56, and Gly-78 together coordinate substrate. Arg-114 is an ATP binding site. Position 131 (Arg-131) interacts with substrate. A 3-dehydroquinate synthase region spans residues 162–492 (EKEISTIEKP…DPLELLEVVD (331 aa)).

It in the N-terminal section; belongs to the shikimate kinase family. The protein in the C-terminal section; belongs to the sugar phosphate cyclases superfamily. Dehydroquinate synthase family. Requires Mg(2+) as cofactor. NAD(+) serves as cofactor. The cofactor is a divalent metal cation.

It localises to the cytoplasm. The enzyme catalyses 7-phospho-2-dehydro-3-deoxy-D-arabino-heptonate = 3-dehydroquinate + phosphate. It carries out the reaction shikimate + ATP = 3-phosphoshikimate + ADP + H(+). It participates in metabolic intermediate biosynthesis; chorismate biosynthesis; chorismate from D-erythrose 4-phosphate and phosphoenolpyruvate: step 2/7. It functions in the pathway metabolic intermediate biosynthesis; chorismate biosynthesis; chorismate from D-erythrose 4-phosphate and phosphoenolpyruvate: step 5/7. Functionally, catalyzes the specific phosphorylation of the 3-hydroxyl group of shikimic acid using ATP as a cosubstrate. In Thermotoga maritima (strain ATCC 43589 / DSM 3109 / JCM 10099 / NBRC 100826 / MSB8), this protein is Bifunctional shikimate kinase/3-dehydroquinate synthase (aroKB).